A 285-amino-acid chain; its full sequence is Pantothenate synthetase (285 aa).

Position 30–37 (30–37 (MGNLHAGH)) interacts with ATP. The active-site Proton donor is histidine 37. Glutamine 61 is a binding site for (R)-pantoate. Glutamine 61 contacts beta-alanine. Position 149-152 (149-152 (GEKD)) interacts with ATP. Position 155 (glutamine 155) interacts with (R)-pantoate. 186-189 (LSSR) is an ATP binding site.

The protein belongs to the pantothenate synthetase family. Homodimer.

It localises to the cytoplasm. The enzyme catalyses (R)-pantoate + beta-alanine + ATP = (R)-pantothenate + AMP + diphosphate + H(+). The protein operates within cofactor biosynthesis; (R)-pantothenate biosynthesis; (R)-pantothenate from (R)-pantoate and beta-alanine: step 1/1. Catalyzes the condensation of pantoate with beta-alanine in an ATP-dependent reaction via a pantoyl-adenylate intermediate. The sequence is that of Pantothenate synthetase from Ectopseudomonas mendocina (strain ymp) (Pseudomonas mendocina).